We begin with the raw amino-acid sequence, 138 residues long: Transcriptional activator protein (138 aa).

Over residues 1 to 20 the composition is skewed to low complexity; it reads MTGSKKTPSTSPSKKLSSPP. The interval 1 to 23 is disordered; sequence MTGSKKTPSTSPSKKLSSPPEVK. The Nuclear localization signal motif lies at 23-37; the sequence is KLRHRFAKRQIRRRR. A zinc finger lies at 42–59; sequence CGCSIYIHINCVNNGFTH. A compositionally biased stretch (polar residues) spans 85–106; it reads NTASGDANVHTQPGISHSSQSK. The segment at 85 to 123 is disordered; the sequence is NTASGDANVHTQPGISHSSQSKPQHEDSVGSPQSLLQLP. Positions 113–123 are enriched in low complexity; it reads VGSPQSLLQLP. The transactivation stretch occupies residues 124 to 138; it reads SLDDVDDDFWADLLK.

It belongs to the geminiviridae transcriptional activator protein family. As to quaternary structure, monomer. Homodimer. Homooligomer. Self-interaction correlates with nuclear localization and efficient activation of transcription. Monomers suppress local silencing by interacting with and inactivating host adenosine kinase 2 (ADK2) in the cytoplasm. Interacts with and inhibits host SNF1 kinase. Binds to ssDNA. In terms of processing, phosphorylated.

It is found in the host nucleus. The protein localises to the host cytoplasm. In terms of biological role, strong activator of the late viral genes promoters. Enhances the expression of the capsid protein and nuclear shuttle protein. Acts as a suppressor of RNA-mediated gene silencing, also known as post-transcriptional gene silencing (PTGS), a mechanism of plant viral defense that limits the accumulation of viral RNAs. Suppresses the host RNA silencing by inhibiting adenosine kinase 2 (ADK2), a kinase involved in a general methylation pathway. Also suppresses the host basal defense by interacting with and inhibiting SNF1 kinase, a key regulator of cell metabolism implicated in innate antiviral defense. Determines pathogenicity. In Pepper huasteco yellow vein virus (PHYVV), this protein is Transcriptional activator protein.